Consider the following 426-residue polypeptide: Enolase (426 aa).

Position 163 (glutamine 163) interacts with (2R)-2-phosphoglycerate. The Proton donor role is filled by glutamate 205. Mg(2+)-binding residues include aspartate 242, glutamate 285, and aspartate 312. Residues lysine 337, arginine 366, serine 367, and lysine 388 each coordinate (2R)-2-phosphoglycerate. Lysine 337 functions as the Proton acceptor in the catalytic mechanism.

It belongs to the enolase family. Mg(2+) serves as cofactor.

Its subcellular location is the cytoplasm. The protein localises to the secreted. The protein resides in the cell surface. The enzyme catalyses (2R)-2-phosphoglycerate = phosphoenolpyruvate + H2O. It functions in the pathway carbohydrate degradation; glycolysis; pyruvate from D-glyceraldehyde 3-phosphate: step 4/5. Catalyzes the reversible conversion of 2-phosphoglycerate (2-PG) into phosphoenolpyruvate (PEP). It is essential for the degradation of carbohydrates via glycolysis. The protein is Enolase of Gluconobacter oxydans (strain 621H) (Gluconobacter suboxydans).